Reading from the N-terminus, the 126-residue chain is Fluoride-specific ion channel FluC (126 aa).

Helical transmembrane passes span 3–23, 35–55, 68–88, and 103–123; these read LSIL…WFLG, LGTL…VAYF, FIIT…AEVV, and IAIH…TVAV. The Na(+) site is built by glycine 75 and serine 78.

Belongs to the fluoride channel Fluc/FEX (TC 1.A.43) family.

Its subcellular location is the cell inner membrane. The enzyme catalyses fluoride(in) = fluoride(out). With respect to regulation, na(+) is not transported, but it plays an essential structural role and its presence is essential for fluoride channel function. Its function is as follows. Fluoride-specific ion channel. Important for reducing fluoride concentration in the cell, thus reducing its toxicity. This chain is Fluoride-specific ion channel FluC, found in Paraburkholderia phymatum (strain DSM 17167 / CIP 108236 / LMG 21445 / STM815) (Burkholderia phymatum).